The sequence spans 452 residues: Putrescine hydroxycinnamoyltransferase (452 aa).

His-151 acts as the Proton acceptor in catalysis. A disordered region spans residues 213–234 (PAAGVDGDVGGDHKQQHGHGGE). Residues 222–234 (GGDHKQQHGHGGE) are compositionally biased toward basic and acidic residues. Catalysis depends on Asp-398, which acts as the Proton acceptor.

This sequence belongs to the plant acyltransferase family. As to expression, highly expressed in roots. Expressed at low levels in flowers.

Its function is as follows. Hydroxycinnamoyl transferase that catalyzes the transfer of an acyl from p-coumaryol-CoA to putrescine, to produce coumaroyl putrescine. Can use feruloyl-CoA, caffeoyl-CoA and sinapoyl-CoA as acyl donors. Seems to be able to transfer the acyl group from feruloyl-CoA to the acyl acceptors agmatine and spermidine. The protein is Putrescine hydroxycinnamoyltransferase of Oryza sativa subsp. japonica (Rice).